Here is a 359-residue protein sequence, read N- to C-terminus: Protein RecA (359 aa).

64-71 contacts ATP; the sequence is GHESSGKT. The interval 328–359 is disordered; sequence NKYPNKDSNDSPKEGSKIKTKVNPAVTQDELI. Residues 331–344 are compositionally biased toward basic and acidic residues; that stretch reads PNKDSNDSPKEGSK.

Belongs to the RecA family.

It is found in the cytoplasm. In terms of biological role, can catalyze the hydrolysis of ATP in the presence of single-stranded DNA, the ATP-dependent uptake of single-stranded DNA by duplex DNA, and the ATP-dependent hybridization of homologous single-stranded DNAs. It interacts with LexA causing its activation and leading to its autocatalytic cleavage. This Francisella tularensis subsp. novicida (strain U112) protein is Protein RecA.